We begin with the raw amino-acid sequence, 368 residues long: DNA replication and repair protein RecF (368 aa).

An ATP-binding site is contributed by 30-37; it reads GKNGSGKT.

Belongs to the RecF family.

Its subcellular location is the cytoplasm. Its function is as follows. The RecF protein is involved in DNA metabolism; it is required for DNA replication and normal SOS inducibility. RecF binds preferentially to single-stranded, linear DNA. It also seems to bind ATP. The sequence is that of DNA replication and repair protein RecF from Marinomonas sp. (strain MWYL1).